The primary structure comprises 87 residues: Toxin CsEv3 (87 aa).

The N-terminal stretch at 1-19 (MNSLLMITACLFLIGTVWA) is a signal peptide. One can recognise an LCN-type CS-alpha/beta domain in the interval 20-85 (KEGYLVNKST…TYPLPNKSCG (66 aa)). Cystine bridges form between Cys31-Cys84, Cys35-Cys60, Cys44-Cys65, and Cys48-Cys67. Residue Cys84 is modified to Cysteine amide.

It belongs to the long (4 C-C) scorpion toxin superfamily. Sodium channel inhibitor family. Beta subfamily. Expressed by the venom gland.

The protein resides in the secreted. Beta toxins bind voltage-independently at site-4 of sodium channels (Nav) and shift the voltage of activation toward more negative potentials thereby affecting sodium channel activation and promoting spontaneous and repetitive firing. Induces immediate paralysis in crickets after injection, with a total paralysis occurring within 15-30 minutes and lasting for 1-2 hours. Is also lethal to vertebrate (chicks) when injected in very high dosages (more that 100 mg/kg). In Centruroides sculpturatus (Arizona bark scorpion), this protein is Toxin CsEv3.